We begin with the raw amino-acid sequence, 218 residues long: Synaptonemal complex central element protein 2 (218 aa).

Basic and acidic residues predominate over residues 1-32 (MERQGVDVPHVKCKDQEPQPLGESKEHPRWEE). Positions 1 to 42 (MERQGVDVPHVKCKDQEPQPLGESKEHPRWEENCEEEAGGGP) are disordered. The stretch at 61–87 (SSLDSSIDILQKRAQELIENINKSRQK) forms a coiled coil. A disordered region spans residues 171–218 (RWGPDHSRGKSPPRPGNSQPPDVFVSSVAETTSQATASEVQTNRDGEC). Residues 198 to 211 (VAETTSQATASEVQ) show a composition bias toward polar residues.

Belongs to the SYCE family. Homodimer. Found in a complex with SYCP1 and SYCE1. Interacts with SYCP1, SYCE1 and SYCE3. Interacts with TEX12.

Its subcellular location is the nucleus. The protein localises to the chromosome. Functionally, major component of the transverse central element of synaptonemal complexes (SCS), formed between homologous chromosomes during meiotic prophase. Requires SYCP1 in order to be incorporated into the central element. May have a role in the synaptonemal complex assembly, stabilization and recombination. This chain is Synaptonemal complex central element protein 2 (SYCE2), found in Homo sapiens (Human).